A 62-amino-acid chain; its full sequence is Small ribosomal subunit protein eS30z/eS30y/eS30x (62 aa).

A disordered region spans residues M1 to L38. The span at D25–L38 shows a compositional bias: basic residues.

It belongs to the eukaryotic ribosomal protein eS30 family.

This chain is Small ribosomal subunit protein eS30z/eS30y/eS30x (RPS30A), found in Arabidopsis thaliana (Mouse-ear cress).